Reading from the N-terminus, the 485-residue chain is Glutamyl-tRNA(Gln) amidotransferase subunit A (485 aa).

Catalysis depends on charge relay system residues Lys-78 and Ser-153. The Acyl-ester intermediate role is filled by Ser-177.

This sequence belongs to the amidase family. GatA subfamily. As to quaternary structure, heterotrimer of A, B and C subunits.

It catalyses the reaction L-glutamyl-tRNA(Gln) + L-glutamine + ATP + H2O = L-glutaminyl-tRNA(Gln) + L-glutamate + ADP + phosphate + H(+). Its function is as follows. Allows the formation of correctly charged Gln-tRNA(Gln) through the transamidation of misacylated Glu-tRNA(Gln) in organisms which lack glutaminyl-tRNA synthetase. The reaction takes place in the presence of glutamine and ATP through an activated gamma-phospho-Glu-tRNA(Gln). This Bacillus mycoides (strain KBAB4) (Bacillus weihenstephanensis) protein is Glutamyl-tRNA(Gln) amidotransferase subunit A.